A 140-amino-acid polypeptide reads, in one-letter code: Mitochondrial import receptor subunit TOM22 homolog (140 aa).

Residues 1-11 (MAAAAAGPGAP) show a composition bias toward low complexity. Residues 1 to 40 (MAAAAAGPGAPLSADELLPKGDAEKPEEELEEEDDEELDE) form a disordered region. At 1–81 (MAAAAAGPGA…AQKMYRFSRA (81 aa)) the chain is on the cytoplasmic side. Residue Ser13 is modified to Phosphoserine. Residues 25–40 (KPEEELEEEDDEELDE) are compositionally biased toward acidic residues. Residues 39-48 (DETLSERLWG) are import sequence; necessary for mitochondrion outer membrane localization and integration in the TOM complex. Thr41 bears the Phosphothreonine mark. Ser43 carries the post-translational modification Phosphoserine. Positions 81 to 101 (AALWIGTTSFMILVLPVVFET) are TMD; necessary for mitochondrion outer membrane localization and integration in the TOM complex. Residues 82–101 (ALWIGTTSFMILVLPVVFET) traverse the membrane as a helical segment. The Mitochondrial intermembrane portion of the chain corresponds to 102 to 140 (EKLQMEQQQQLQQRQILLGPNTGLSGGMPGALPSLPGKI). Residues 121–140 (PNTGLSGGMPGALPSLPGKI) form a C-tail signal; necessary for mitochondrion outer membrane localization and integration in the TOM complex region.

It belongs to the Tom22 family. Forms part of the preprotein translocase complex of the outer mitochondrial membrane (TOM complex) which consists of at least 7 different proteins (TOMM5, TOMM6, TOMM7, TOMM20, TOMM22, TOMM40 and TOMM70). Interacts with PPP2R2B and TOMM40.

Its subcellular location is the mitochondrion outer membrane. In terms of biological role, central receptor component of the translocase of the outer membrane of mitochondria (TOM complex) responsible for the recognition and translocation of cytosolically synthesized mitochondrial preproteins. Together with the peripheral receptor TOM20 functions as the transit peptide receptor and facilitates the movement of preproteins into the translocation pore. Required for the translocation across the mitochondrial outer membrane of cytochrome P450 monooxygenases. The chain is Mitochondrial import receptor subunit TOM22 homolog (TOMM22) from Bos taurus (Bovine).